Consider the following 34-residue polypeptide: Photosystem II reaction center protein M (34 aa).

Residues 5–25 traverse the membrane as a helical segment; it reads ILAFIATALFILVPTAFLLII.

The protein belongs to the PsbM family. As to quaternary structure, PSII is composed of 1 copy each of membrane proteins PsbA, PsbB, PsbC, PsbD, PsbE, PsbF, PsbH, PsbI, PsbJ, PsbK, PsbL, PsbM, PsbT, PsbX, PsbY, PsbZ, Psb30/Ycf12, at least 3 peripheral proteins of the oxygen-evolving complex and a large number of cofactors. It forms dimeric complexes.

It localises to the plastid. Its subcellular location is the chloroplast thylakoid membrane. Its function is as follows. One of the components of the core complex of photosystem II (PSII). PSII is a light-driven water:plastoquinone oxidoreductase that uses light energy to abstract electrons from H(2)O, generating O(2) and a proton gradient subsequently used for ATP formation. It consists of a core antenna complex that captures photons, and an electron transfer chain that converts photonic excitation into a charge separation. This subunit is found at the monomer-monomer interface. The polypeptide is Photosystem II reaction center protein M (Phaseolus vulgaris (Kidney bean)).